The primary structure comprises 126 residues: Protein ApaG (126 aa).

One can recognise an ApaG domain in the interval 2–126 (SDPRYQIDVS…FRLAVPGALH (125 aa)).

In Pseudomonas putida (strain ATCC 700007 / DSM 6899 / JCM 31910 / BCRC 17059 / LMG 24140 / F1), this protein is Protein ApaG.